The primary structure comprises 501 residues: ATP synthase subunit alpha (501 aa).

ATP is bound at residue 169–176 (GDRQTGKT).

This sequence belongs to the ATPase alpha/beta chains family. In terms of assembly, F-type ATPases have 2 components, CF(1) - the catalytic core - and CF(0) - the membrane proton channel. CF(1) has five subunits: alpha(3), beta(3), gamma(1), delta(1), epsilon(1). CF(0) has three main subunits: a(1), b(2) and c(9-12). The alpha and beta chains form an alternating ring which encloses part of the gamma chain. CF(1) is attached to CF(0) by a central stalk formed by the gamma and epsilon chains, while a peripheral stalk is formed by the delta and b chains.

The protein resides in the cell inner membrane. The catalysed reaction is ATP + H2O + 4 H(+)(in) = ADP + phosphate + 5 H(+)(out). Produces ATP from ADP in the presence of a proton gradient across the membrane. The alpha chain is a regulatory subunit. This chain is ATP synthase subunit alpha, found in Campylobacter lari (strain RM2100 / D67 / ATCC BAA-1060).